A 727-amino-acid chain; its full sequence is 1,4-alpha-glucan branching enzyme GlgB (727 aa).

The active-site Nucleophile is the Asp405. Glu458 functions as the Proton donor in the catalytic mechanism.

It belongs to the glycosyl hydrolase 13 family. GlgB subfamily. In terms of assembly, monomer.

It carries out the reaction Transfers a segment of a (1-&gt;4)-alpha-D-glucan chain to a primary hydroxy group in a similar glucan chain.. The protein operates within glycan biosynthesis; glycogen biosynthesis. Its function is as follows. Catalyzes the formation of the alpha-1,6-glucosidic linkages in glycogen by scission of a 1,4-alpha-linked oligosaccharide from growing alpha-1,4-glucan chains and the subsequent attachment of the oligosaccharide to the alpha-1,6 position. The sequence is that of 1,4-alpha-glucan branching enzyme GlgB from Yersinia pseudotuberculosis serotype I (strain IP32953).